We begin with the raw amino-acid sequence, 188 residues long: MVRPKLAFYILPLLLAFLGSALGWPGSQSCSVQEVLRHYQAVIFQDLQTAMQWAGLGVQHTQPGSRHHRFIQKNLTGAGGGQGQPGTSCDAQKESSILLSIESLGQTLLGSVAGVPHNALEKAAWTVAVRTEAVMRRHCGTSYRIQQPRKHAVQLRNSRRRLLLRALYAVATCWEKLFALSAMATGEF.

The first 23 residues, 1 to 23 (MVRPKLAFYILPLLLAFLGSALG), serve as a signal peptide directing secretion. The N-linked (GlcNAc...) asparagine glycan is linked to asparagine 74.

This is an uncharacterized protein from Mus musculus (Mouse).